The chain runs to 205 residues: UPF0301 protein Bind_0718 (205 aa).

The protein belongs to the UPF0301 (AlgH) family.

This Beijerinckia indica subsp. indica (strain ATCC 9039 / DSM 1715 / NCIMB 8712) protein is UPF0301 protein Bind_0718.